We begin with the raw amino-acid sequence, 151 residues long: Large ribosomal subunit protein bL9 (151 aa).

This sequence belongs to the bacterial ribosomal protein bL9 family.

Functionally, binds to the 23S rRNA. This Lactobacillus delbrueckii subsp. bulgaricus (strain ATCC 11842 / DSM 20081 / BCRC 10696 / JCM 1002 / NBRC 13953 / NCIMB 11778 / NCTC 12712 / WDCM 00102 / Lb 14) protein is Large ribosomal subunit protein bL9.